A 720-amino-acid chain; its full sequence is Putative glutamine--fructose-6-phosphate aminotransferase [isomerizing] (720 aa).

Cys-2 functions as the Nucleophile; for GATase activity in the catalytic mechanism. The 320-residue stretch at 2-321 (CGIFGYCNFL…DNDTAHIYDG (320 aa)) folds into the Glutamine amidotransferase type-2 domain. Polar residues predominate over residues 266-280 (STTSTFNHGSSTETP). Residues 266–285 (STTSTFNHGSSTETPAENGL) are disordered. 2 consecutive SIS domains span residues 393-532 (WLTE…DLVS) and 565-710 (CDKK…VDLP).

It carries out the reaction D-fructose 6-phosphate + L-glutamine = D-glucosamine 6-phosphate + L-glutamate. Its pathway is nucleotide-sugar biosynthesis; UDP-N-acetyl-alpha-D-glucosamine biosynthesis; alpha-D-glucosamine 6-phosphate from D-fructose 6-phosphate: step 1/1. Involved in amino sugar synthesis (formation of chitin, supplies the amino sugars of asparagine-linked oligosaccharides of glycoproteins). The chain is Putative glutamine--fructose-6-phosphate aminotransferase [isomerizing] from Saccharomyces cerevisiae (strain JAY291) (Baker's yeast).